An 819-amino-acid chain; its full sequence is Endonuclease MutS2 (819 aa).

339-346 lines the ATP pocket; it reads GPNTGGKT. In terms of domain architecture, Smr spans 744 to 819; it reads VDVRGLRVDE…GAGVTVAELA (76 aa).

It belongs to the DNA mismatch repair MutS family. MutS2 subfamily. Homodimer. Binds to stalled ribosomes, contacting rRNA.

Endonuclease that is involved in the suppression of homologous recombination and thus may have a key role in the control of bacterial genetic diversity. Its function is as follows. Acts as a ribosome collision sensor, splitting the ribosome into its 2 subunits. Detects stalled/collided 70S ribosomes which it binds and splits by an ATP-hydrolysis driven conformational change. Acts upstream of the ribosome quality control system (RQC), a ribosome-associated complex that mediates the extraction of incompletely synthesized nascent chains from stalled ribosomes and their subsequent degradation. Probably generates substrates for RQC. This Gemmatimonas aurantiaca (strain DSM 14586 / JCM 11422 / NBRC 100505 / T-27) protein is Endonuclease MutS2.